Here is a 130-residue protein sequence, read N- to C-terminus: Small ribosomal subunit protein uS9 (130 aa).

The segment covering 101–110 has biased composition (basic and acidic residues); the sequence is AGFLTRDPRM. Residues 101–130 are disordered; it reads AGFLTRDPRMKERKKYGLKKARRAPQFSKR. Residues 111–130 are compositionally biased toward basic residues; sequence KERKKYGLKKARRAPQFSKR.

This sequence belongs to the universal ribosomal protein uS9 family.

This is Small ribosomal subunit protein uS9 from Clostridium tetani (strain Massachusetts / E88).